We begin with the raw amino-acid sequence, 498 residues long: Serine hydroxymethyltransferase, mitochondrial (498 aa).

N6-(pyridoxal phosphate)lysine is present on lysine 273.

The protein belongs to the SHMT family. In terms of assembly, homotetramer. It depends on pyridoxal 5'-phosphate as a cofactor.

Its subcellular location is the mitochondrion. The catalysed reaction is (6R)-5,10-methylene-5,6,7,8-tetrahydrofolate + glycine + H2O = (6S)-5,6,7,8-tetrahydrofolate + L-serine. It functions in the pathway one-carbon metabolism; tetrahydrofolate interconversion. Interconversion of serine and glycine. In Kluyveromyces lactis (strain ATCC 8585 / CBS 2359 / DSM 70799 / NBRC 1267 / NRRL Y-1140 / WM37) (Yeast), this protein is Serine hydroxymethyltransferase, mitochondrial (SHM1).